The chain runs to 633 residues: GRAM domain-containing protein 4 (633 aa).

3 disordered regions span residues 1 to 46, 72 to 109, and 182 to 216; these read MGIA…VRPR, LAES…AGPG, and VLKA…RSQG. Basic and acidic residues predominate over residues 27–39; sequence PWDKGLSGREPPR. Residues S75 and S79 each carry the phosphoserine modification. A compositionally biased stretch (basic and acidic residues) spans 95 to 104; sequence SPRDSEELRD. Residues 134 to 190 are a coiled coil; it reads HLEIALLEKHFLQEELRKLREETNSEMLRQELDRERQRRIELEQKMQEVLKARSEEQ. The span at 190-205 shows a compositional bias: low complexity; sequence QPAQPQQPPKGQSQAS. Transmembrane regions (helical) follow at residues 295-315, 389-409, and 411-431; these read VYMN…LAIL, TTQK…FFPY, and LVGL…DFIF. In terms of domain architecture, GRAM spans 500 to 578; the sequence is GNFHEIFNLT…MDITDIQKYK (79 aa).

Interacts with RTN4 (isoform B).

The protein resides in the mitochondrion membrane. Its subcellular location is the endoplasmic reticulum membrane. In terms of biological role, plays a role as a mediator of E2F1-induced apoptosis in the absence of p53/TP53. Inhibits TLR9 response to nucelic acids and regulates TLR9-mediated innate immune response. This is GRAM domain-containing protein 4 from Mus musculus (Mouse).